Here is a 276-residue protein sequence, read N- to C-terminus: Shikimate dehydrogenase (NADP(+)) (276 aa).

Shikimate-binding positions include 15–17 and threonine 62; that span reads SKS. The active-site Proton acceptor is lysine 66. Residue glutamate 78 coordinates NADP(+). Residues asparagine 87 and aspartate 103 each contribute to the shikimate site. NADP(+) is bound by residues 127-131, 150-155, and methionine 214; these read GAGGV and NRTHIK. Tyrosine 216 contacts shikimate. Residue glycine 239 participates in NADP(+) binding.

It belongs to the shikimate dehydrogenase family. Homodimer.

The catalysed reaction is shikimate + NADP(+) = 3-dehydroshikimate + NADPH + H(+). Its pathway is metabolic intermediate biosynthesis; chorismate biosynthesis; chorismate from D-erythrose 4-phosphate and phosphoenolpyruvate: step 4/7. Functionally, involved in the biosynthesis of the chorismate, which leads to the biosynthesis of aromatic amino acids. Catalyzes the reversible NADPH linked reduction of 3-dehydroshikimate (DHSA) to yield shikimate (SA). The sequence is that of Shikimate dehydrogenase (NADP(+)) from Haemophilus ducreyi (strain 35000HP / ATCC 700724).